Here is a 312-residue protein sequence, read N- to C-terminus: Ribosomal RNA small subunit methyltransferase H (312 aa).

Residues 35–37 (GGH), aspartate 55, phenylalanine 79, aspartate 101, and glutamine 108 contribute to the S-adenosyl-L-methionine site.

This sequence belongs to the methyltransferase superfamily. RsmH family.

It localises to the cytoplasm. The enzyme catalyses cytidine(1402) in 16S rRNA + S-adenosyl-L-methionine = N(4)-methylcytidine(1402) in 16S rRNA + S-adenosyl-L-homocysteine + H(+). Specifically methylates the N4 position of cytidine in position 1402 (C1402) of 16S rRNA. The sequence is that of Ribosomal RNA small subunit methyltransferase H from Buchnera aphidicola subsp. Acyrthosiphon pisum (strain APS) (Acyrthosiphon pisum symbiotic bacterium).